Consider the following 253-residue polypeptide: Ribosomal RNA small subunit methyltransferase I (253 aa).

Residues 230–246 are compositionally biased toward basic and acidic residues; that stretch reads RKEQRSQRSFSKGDKKP. The disordered stretch occupies residues 230-253; the sequence is RKEQRSQRSFSKGDKKPSFKRFKK.

Belongs to the methyltransferase superfamily. RsmI family.

The protein resides in the cytoplasm. It catalyses the reaction cytidine(1402) in 16S rRNA + S-adenosyl-L-methionine = 2'-O-methylcytidine(1402) in 16S rRNA + S-adenosyl-L-homocysteine + H(+). Functionally, catalyzes the 2'-O-methylation of the ribose of cytidine 1402 (C1402) in 16S rRNA. This Leptospira borgpetersenii serovar Hardjo-bovis (strain L550) protein is Ribosomal RNA small subunit methyltransferase I.